Here is a 214-residue protein sequence, read N- to C-terminus: 3,4-dihydroxy-2-butanone 4-phosphate synthase (214 aa).

D-ribulose 5-phosphate is bound by residues 37–38 (RE), Asp-42, 150–154 (RRGHT), and Glu-174. Glu-38 contacts Mg(2+). His-153 serves as a coordination point for Mg(2+).

It belongs to the DHBP synthase family. In terms of assembly, homodimer. Mg(2+) is required as a cofactor. It depends on Mn(2+) as a cofactor.

It carries out the reaction D-ribulose 5-phosphate = (2S)-2-hydroxy-3-oxobutyl phosphate + formate + H(+). It functions in the pathway cofactor biosynthesis; riboflavin biosynthesis; 2-hydroxy-3-oxobutyl phosphate from D-ribulose 5-phosphate: step 1/1. Functionally, catalyzes the conversion of D-ribulose 5-phosphate to formate and 3,4-dihydroxy-2-butanone 4-phosphate. The polypeptide is 3,4-dihydroxy-2-butanone 4-phosphate synthase (Desulfotalea psychrophila (strain LSv54 / DSM 12343)).